A 146-amino-acid chain; its full sequence is Putative pre-16S rRNA nuclease (146 aa).

Belongs to the YqgF nuclease family.

It localises to the cytoplasm. In terms of biological role, could be a nuclease involved in processing of the 5'-end of pre-16S rRNA. This is Putative pre-16S rRNA nuclease from Pediococcus pentosaceus (strain ATCC 25745 / CCUG 21536 / LMG 10740 / 183-1w).